The following is a 36-amino-acid chain: Egg-laying hormone (36 aa).

A Lysine amide modification is found at Lys36.

Belongs to the molluscan ELH family. In terms of tissue distribution, bag cell neurons.

Its subcellular location is the secreted. In terms of biological role, ELH acts as a neurotransmitter locally, upon neurons of the abdominal ganglion and as a hormone by diffusing into the circulating hemolymph and modulating the activity of other organs. It specifically causes contraction of smooth muscle in the ovotestis and expulsion of the egg string. The sequence is that of Egg-laying hormone from Aplysia fasciata (Mottled sea hare).